The following is a 333-amino-acid chain: Uroporphyrinogen decarboxylase (333 aa).

Substrate contacts are provided by residues 22–26, aspartate 71, tyrosine 145, serine 200, and histidine 310; that span reads RQAGR.

This sequence belongs to the uroporphyrinogen decarboxylase family. In terms of assembly, homodimer.

The protein localises to the cytoplasm. The enzyme catalyses uroporphyrinogen III + 4 H(+) = coproporphyrinogen III + 4 CO2. It participates in porphyrin-containing compound metabolism; protoporphyrin-IX biosynthesis; coproporphyrinogen-III from 5-aminolevulinate: step 4/4. Its function is as follows. Catalyzes the decarboxylation of four acetate groups of uroporphyrinogen-III to yield coproporphyrinogen-III. This Thermoplasma acidophilum (strain ATCC 25905 / DSM 1728 / JCM 9062 / NBRC 15155 / AMRC-C165) protein is Uroporphyrinogen decarboxylase.